A 495-amino-acid chain; its full sequence is Trimethylamine methyltransferase MttB1 (495 aa).

Pyl334 is a non-standard amino acid (pyrrolysine).

It belongs to the trimethylamine methyltransferase family. Can form a complex with MttC.

The enzyme catalyses Co(I)-[trimethylamine-specific corrinoid protein] + trimethylamine + H(+) = methyl-Co(III)-[trimethylamine-specific corrinoid protein] + dimethylamine. It functions in the pathway one-carbon metabolism; methanogenesis from trimethylamine. Functionally, catalyzes the transfer of a methyl group from trimethylamine to the corrinoid cofactor of MttC. This chain is Trimethylamine methyltransferase MttB1 (mttB1), found in Methanosarcina mazei (strain ATCC BAA-159 / DSM 3647 / Goe1 / Go1 / JCM 11833 / OCM 88) (Methanosarcina frisia).